We begin with the raw amino-acid sequence, 592 residues long: 2-succinyl-5-enolpyruvyl-6-hydroxy-3-cyclohexene-1-carboxylate synthase (592 aa).

Belongs to the TPP enzyme family. MenD subfamily. As to quaternary structure, homodimer. It depends on Mg(2+) as a cofactor. Requires Mn(2+) as cofactor. Thiamine diphosphate serves as cofactor.

The catalysed reaction is isochorismate + 2-oxoglutarate + H(+) = 5-enolpyruvoyl-6-hydroxy-2-succinyl-cyclohex-3-ene-1-carboxylate + CO2. It participates in quinol/quinone metabolism; 1,4-dihydroxy-2-naphthoate biosynthesis; 1,4-dihydroxy-2-naphthoate from chorismate: step 2/7. The protein operates within quinol/quinone metabolism; menaquinone biosynthesis. Functionally, catalyzes the thiamine diphosphate-dependent decarboxylation of 2-oxoglutarate and the subsequent addition of the resulting succinic semialdehyde-thiamine pyrophosphate anion to isochorismate to yield 2-succinyl-5-enolpyruvyl-6-hydroxy-3-cyclohexene-1-carboxylate (SEPHCHC). The polypeptide is 2-succinyl-5-enolpyruvyl-6-hydroxy-3-cyclohexene-1-carboxylate synthase (Haloarcula marismortui (strain ATCC 43049 / DSM 3752 / JCM 8966 / VKM B-1809) (Halobacterium marismortui)).